The primary structure comprises 218 residues: Ribose-5-phosphate isomerase A (218 aa).

Substrate is bound by residues 27–30, 80–83, and 93–96; these read TGST, DGAD, and KGGG. The active-site Proton acceptor is Glu102. Lys120 lines the substrate pocket.

The protein belongs to the ribose 5-phosphate isomerase family. As to quaternary structure, homodimer.

The catalysed reaction is aldehydo-D-ribose 5-phosphate = D-ribulose 5-phosphate. Its pathway is carbohydrate degradation; pentose phosphate pathway; D-ribose 5-phosphate from D-ribulose 5-phosphate (non-oxidative stage): step 1/1. Functionally, catalyzes the reversible conversion of ribose-5-phosphate to ribulose 5-phosphate. The polypeptide is Ribose-5-phosphate isomerase A (Picrophilus torridus (strain ATCC 700027 / DSM 9790 / JCM 10055 / NBRC 100828 / KAW 2/3)).